A 428-amino-acid chain; its full sequence is Serine--tRNA ligase (428 aa).

231–233 provides a ligand contact to L-serine; sequence TAE. Residues 262–264 and V278 each bind ATP; that span reads RRE. An L-serine-binding site is contributed by E285. An ATP-binding site is contributed by 349 to 352; the sequence is EVSS. S384 is a binding site for L-serine.

Belongs to the class-II aminoacyl-tRNA synthetase family. Type-1 seryl-tRNA synthetase subfamily. In terms of assembly, homodimer. The tRNA molecule binds across the dimer.

It is found in the cytoplasm. It catalyses the reaction tRNA(Ser) + L-serine + ATP = L-seryl-tRNA(Ser) + AMP + diphosphate + H(+). The catalysed reaction is tRNA(Sec) + L-serine + ATP = L-seryl-tRNA(Sec) + AMP + diphosphate + H(+). Its pathway is aminoacyl-tRNA biosynthesis; selenocysteinyl-tRNA(Sec) biosynthesis; L-seryl-tRNA(Sec) from L-serine and tRNA(Sec): step 1/1. Its function is as follows. Catalyzes the attachment of serine to tRNA(Ser). Is also able to aminoacylate tRNA(Sec) with serine, to form the misacylated tRNA L-seryl-tRNA(Sec), which will be further converted into selenocysteinyl-tRNA(Sec). The protein is Serine--tRNA ligase of Chlamydia trachomatis serovar L2 (strain ATCC VR-902B / DSM 19102 / 434/Bu).